Reading from the N-terminus, the 124-residue chain is Fluoride-specific ion channel FluC 2 (124 aa).

3 consecutive transmembrane segments (helical) span residues 36-56 (TFLI…YLAF), 66-86 (LFVM…SLDT), and 100-120 (LYAI…LALV). 2 residues coordinate Na(+): Gly74 and Thr77.

Belongs to the fluoride channel Fluc/FEX (TC 1.A.43) family.

The protein resides in the cell inner membrane. It catalyses the reaction fluoride(in) = fluoride(out). Its activity is regulated as follows. Na(+) is not transported, but it plays an essential structural role and its presence is essential for fluoride channel function. In terms of biological role, fluoride-specific ion channel. Important for reducing fluoride concentration in the cell, thus reducing its toxicity. In Nitrobacter hamburgensis (strain DSM 10229 / NCIMB 13809 / X14), this protein is Fluoride-specific ion channel FluC 2.